The chain runs to 101 residues: Ubiquitin-related modifier 1 (101 aa).

G101 is modified (1-thioglycine). G101 is covalently cross-linked (Glycyl lysine isopeptide (Gly-Lys) (interchain with K-? in acceptor proteins)).

Belongs to the URM1 family. Post-translationally, C-terminal thiocarboxylation occurs in 2 steps, it is first acyl-adenylated (-COAMP) via the hesA/moeB/thiF part of UBA4, then thiocarboxylated (-COSH) via the rhodanese domain of UBA4.

It localises to the cytoplasm. Its pathway is tRNA modification; 5-methoxycarbonylmethyl-2-thiouridine-tRNA biosynthesis. Acts as a sulfur carrier required for 2-thiolation of mcm(5)S(2)U at tRNA wobble positions of cytosolic tRNA(Lys), tRNA(Glu) and tRNA(Gln). Serves as sulfur donor in tRNA 2-thiolation reaction by being thiocarboxylated (-COSH) at its C-terminus by the MOCS3 homolog UBA4. The sulfur is then transferred to tRNA to form 2-thiolation of mcm(5)S(2)U. Prior mcm(5) tRNA modification by the elongator complex is required for 2-thiolation. Also acts as a ubiquitin-like protein (UBL) that is covalently conjugated via an isopeptide bond to lysine residues of target proteins such as AHP1. The thiocarboxylated form serves as substrate for conjugation and oxidative stress specifically induces the formation of UBL-protein conjugates. This chain is Ubiquitin-related modifier 1, found in Debaryomyces hansenii (strain ATCC 36239 / CBS 767 / BCRC 21394 / JCM 1990 / NBRC 0083 / IGC 2968) (Yeast).